A 178-amino-acid chain; its full sequence is Large ribosomal subunit protein uL6 (178 aa).

This sequence belongs to the universal ribosomal protein uL6 family. In terms of assembly, part of the 50S ribosomal subunit.

This protein binds to the 23S rRNA, and is important in its secondary structure. It is located near the subunit interface in the base of the L7/L12 stalk, and near the tRNA binding site of the peptidyltransferase center. The polypeptide is Large ribosomal subunit protein uL6 (Paenarthrobacter aurescens (strain TC1)).